The following is a 279-amino-acid chain: Digeranylgeranylglyceryl phosphate synthase (279 aa).

8 helical membrane passes run 5-25, 27-47, 90-110, 127-147, 148-168, 198-218, 219-239, and 259-279; these read GFFA…AIVA, LIAT…VLLV, FLLG…IALV, FFGN…GGAY, AGWH…LAML, KTAL…AVPY, LWWG…ILFA, and TLLK…AVFL.

Belongs to the UbiA prenyltransferase family. DGGGP synthase subfamily. Requires Mg(2+) as cofactor.

The protein resides in the cell membrane. The enzyme catalyses sn-3-O-(geranylgeranyl)glycerol 1-phosphate + (2E,6E,10E)-geranylgeranyl diphosphate = 2,3-bis-O-(geranylgeranyl)-sn-glycerol 1-phosphate + diphosphate. It participates in membrane lipid metabolism; glycerophospholipid metabolism. Prenyltransferase that catalyzes the transfer of the geranylgeranyl moiety of geranylgeranyl diphosphate (GGPP) to the C2 hydroxyl of (S)-3-O-geranylgeranylglyceryl phosphate (GGGP). This reaction is the second ether-bond-formation step in the biosynthesis of archaeal membrane lipids. This is Digeranylgeranylglyceryl phosphate synthase from Methanoregula boonei (strain DSM 21154 / JCM 14090 / 6A8).